Here is a 181-residue protein sequence, read N- to C-terminus: Transcription termination/antitermination protein NusG (181 aa).

In terms of domain architecture, KOW spans 130–161 (PGEMVRVNDGPFADFNGVVEEVDYEKSRLKVS).

Belongs to the NusG family. In terms of assembly, monomer. Interacts with the transcription termination factor Rho and with RNA polymerase.

Participates in transcription elongation, termination and antitermination. In the absence of Rho, increases the rate of transcription elongation by the RNA polymerase (RNAP), probably by partially suppressing pausing. In the presence of Rho, modulates most Rho-dependent termination events by interacting with the RNAP to render the complex more susceptible to the termination activity of Rho. May be required to overcome a kinetic limitation of Rho to function at certain terminators. Also involved in ribosomal RNA transcriptional antitermination. This is Transcription termination/antitermination protein NusG from Salmonella typhi.